The chain runs to 421 residues: ATP-dependent RNA helicase RhlB (421 aa).

Positions 9–37 (QKFSDFALHPAVIEALEKKGFHNCTPIQA) match the Q motif motif. Positions 40 to 219 (LPLTLEGRDV…FEQMNNAEYV (180 aa)) constitute a Helicase ATP-binding domain. 53–60 (AQTGTGKT) serves as a coordination point for ATP. Residues 165-168 (DEAD) carry the DEAD box motif. Residues 245-390 (RLLQTLLEEE…VSKYNPDALM (146 aa)) form the Helicase C-terminal domain. Positions 396-421 (PLRLTRARPGNGPRRNGPPRNRRRSG) are disordered. Over residues 403–414 (RPGNGPRRNGPP) the composition is skewed to low complexity.

Belongs to the DEAD box helicase family. RhlB subfamily. Component of the RNA degradosome, which is a multiprotein complex involved in RNA processing and mRNA degradation.

It is found in the cytoplasm. It catalyses the reaction ATP + H2O = ADP + phosphate + H(+). Its function is as follows. DEAD-box RNA helicase involved in RNA degradation. Has RNA-dependent ATPase activity and unwinds double-stranded RNA. In Klebsiella pneumoniae (strain 342), this protein is ATP-dependent RNA helicase RhlB.